Consider the following 137-residue polypeptide: ATP synthase epsilon chain (137 aa).

The protein belongs to the ATPase epsilon chain family. F-type ATPases have 2 components, CF(1) - the catalytic core - and CF(0) - the membrane proton channel. CF(1) has five subunits: alpha(3), beta(3), gamma(1), delta(1), epsilon(1). CF(0) has three main subunits: a, b and c.

The protein resides in the cellular thylakoid membrane. Produces ATP from ADP in the presence of a proton gradient across the membrane. In Trichodesmium erythraeum (strain IMS101), this protein is ATP synthase epsilon chain.